Consider the following 156-residue polypeptide: Probable succinate transporter subunit YjjB (156 aa).

4 consecutive transmembrane segments (helical) span residues Trp-7–Phe-27, Phe-54–Ile-74, Val-86–Ile-106, and Phe-128–Trp-148.

It belongs to the ThrE exporter (TC 2.A.79) family. The transporter is composed of YjjB and YjjP.

It is found in the cell inner membrane. Its function is as follows. Involved in succinate export with YjjP. Both proteins are required for export. This chain is Probable succinate transporter subunit YjjB, found in Yersinia enterocolitica serotype O:8 / biotype 1B (strain NCTC 13174 / 8081).